Consider the following 588-residue polypeptide: Pescadillo homolog (588 aa).

The segment at 1–54 (MGGLEKKKYERGSATNYITRNKARKKLQLSLADFRRLCILKGIYPHEPKHKKKV) is required for 28S ribosomal RNA processing. The tract at residues 1-257 (MGGLEKKKYE…PKLEGQAQAE (257 aa)) is sufficient for nucleolar localization. An N6-acetyllysine modification is found at K98. The tract at residues 294–314 (EAEVDEFPTDGEMSAQEEDRR) is disordered. Residues 306-415 (MSAQEEDRRK…LLLPVAEYFS (110 aa)) form a sufficient for interaction with MAP1B region. A BRCT domain is found at 322-415 (KHKKLFEGLK…LLLPVAEYFS (94 aa)). Residues 448 to 515 (GEDPGNLNES…GKKPRVMAGT (68 aa)) form a disordered region. Over residues 456 to 486 (ESEEEEEEDDNNEGDGDEEGENEEEEEDAEA) the composition is skewed to acidic residues. Basic and acidic residues predominate over residues 487–508 (GSEKEEEARLAALEEQRMEGKK). A Glycyl lysine isopeptide (Lys-Gly) (interchain with G-Cter in SUMO1); alternate cross-link involves residue K517. A Glycyl lysine isopeptide (Lys-Gly) (interchain with G-Cter in SUMO2); alternate cross-link involves residue K517. The interval 539–588 (MMKKREKYLYQKIMFGKRRKIREANKLAEKRKAHDEAVRSEKKAKKARPE) is required for 28S ribosomal RNA processing. The interval 565–588 (LAEKRKAHDEAVRSEKKAKKARPE) is disordered.

The protein belongs to the pescadillo family. As to quaternary structure, component of the PeBoW complex, composed of BOP1, PES1 and WDR12. The complex is held together by BOP1, which interacts with PES1 via its N-terminal domain and with WDR12 via a high-affinity interaction between the seven-bladed beta-propeller domains of the 2 proteins. The PeBoW complex associates with the 66S pre-ribosome. The PeBoW complex also associates with DDX27, PES1 interacts directly with DDX27. Interacts with IRS1 and UBTF. May interact with MAP1B. Sumoylated. Significant levels are detected in a variety of cancer cell lines, including glioblastoma, breast carcinoma, colon carcinoma and cervical carcinoma cells. Levels are abnormally elevated in malignant tumors of astrocytic origin.

Its subcellular location is the nucleus. It localises to the nucleolus. The protein localises to the nucleoplasm. The protein resides in the chromosome. In terms of biological role, component of the PeBoW complex, which is required for maturation of 28S and 5.8S ribosomal RNAs and formation of the 60S ribosome. The polypeptide is Pescadillo homolog (Homo sapiens (Human)).